Consider the following 182-residue polypeptide: ATP synthase subunit delta (182 aa).

This sequence belongs to the ATPase delta chain family. F-type ATPases have 2 components, F(1) - the catalytic core - and F(0) - the membrane proton channel. F(1) has five subunits: alpha(3), beta(3), gamma(1), delta(1), epsilon(1). CF(0) has four main subunits: a(1), b(1), b'(1) and c(10-14). The alpha and beta chains form an alternating ring which encloses part of the gamma chain. F(1) is attached to F(0) by a central stalk formed by the gamma and epsilon chains, while a peripheral stalk is formed by the delta, b and b' chains.

Its subcellular location is the cellular thylakoid membrane. Functionally, f(1)F(0) ATP synthase produces ATP from ADP in the presence of a proton or sodium gradient. F-type ATPases consist of two structural domains, F(1) containing the extramembraneous catalytic core and F(0) containing the membrane proton channel, linked together by a central stalk and a peripheral stalk. During catalysis, ATP synthesis in the catalytic domain of F(1) is coupled via a rotary mechanism of the central stalk subunits to proton translocation. This protein is part of the stalk that links CF(0) to CF(1). It either transmits conformational changes from CF(0) to CF(1) or is implicated in proton conduction. The polypeptide is ATP synthase subunit delta (Prochlorococcus marinus (strain MIT 9211)).